A 179-amino-acid chain; its full sequence is Stathmin-2 (179 aa).

The interval 1–26 (MAKTAMAYKEKMKELSMLSLICSCFY) is membrane attachment. A phosphoserine mark is found at Ser16, Ser50, Ser62, Ser73, Ser80, and Ser97. Residues 38–179 (DDMEVKQINK…NKELQVELSG (142 aa)) enclose the SLD domain. Positions 39-96 (DMEVKQINKRASGQAFELILKPPSPVSEAPRTLASPKKKELSLEEIQKKLEAAEERRK) are regulatory/phosphorylation domain. Residues 74 to 179 (PKKKELSLEE…NKELQVELSG (106 aa)) are a coiled coil.

The protein belongs to the stathmin family. As to expression, expression is neuron-specific and found in cerebellum, forebrain, midbrain, tectum and spinal cord.

The protein resides in the cytoplasm. Its subcellular location is the perinuclear region. It localises to the cell projection. It is found in the growth cone. The protein localises to the membrane. The protein resides in the axon. Its subcellular location is the lamellipodium. Functionally, is a key regulator of neurite extension through regulation of microtubule instabilily. The chain is Stathmin-2 (STMN2) from Gallus gallus (Chicken).